A 58-amino-acid chain; its full sequence is Photosystem II reaction center X protein (58 aa).

Residues 27 to 47 (IGSFLAAAAFIVVPAASFLIW) traverse the membrane as a helical segment.

The protein belongs to the PsbX family. Type 2 subfamily. As to quaternary structure, PSII consists of a core antenna complex that captures photons, and an electron transfer chain that converts photonic excitation into a charge separation. PSII forms dimeric complexes.

The protein localises to the cellular thylakoid membrane. In terms of biological role, involved in the binding and/or turnover of quinones at the Q(B) site of Photosystem II. This chain is Photosystem II reaction center X protein, found in Prochlorococcus marinus (strain MIT 9211).